Reading from the N-terminus, the 968-residue chain is RNA polymerase-associated protein RapA (968 aa).

One can recognise a Helicase ATP-binding domain in the interval 164-334 (DVGRRHAPRV…FARLRLLDPN (171 aa)). 177-184 (DEVGLGKT) serves as a coordination point for ATP. A DEAH box motif is present at residues 280 to 283 (DEAH). In terms of domain architecture, Helicase C-terminal spans 490–662 (RVEWLMGYLT…YLASPDQTEG (173 aa)).

The protein belongs to the SNF2/RAD54 helicase family. RapA subfamily. In terms of assembly, interacts with the RNAP. Has a higher affinity for the core RNAP than for the holoenzyme. Its ATPase activity is stimulated by binding to RNAP.

Functionally, transcription regulator that activates transcription by stimulating RNA polymerase (RNAP) recycling in case of stress conditions such as supercoiled DNA or high salt concentrations. Probably acts by releasing the RNAP, when it is trapped or immobilized on tightly supercoiled DNA. Does not activate transcription on linear DNA. Probably not involved in DNA repair. The protein is RNA polymerase-associated protein RapA of Escherichia coli O1:K1 / APEC.